The primary structure comprises 734 residues: Ribosomal RNA large subunit methyltransferase K/L (734 aa).

In terms of domain architecture, THUMP spans 49–167 (HAYRICMWSR…KTEHTYCLDL (119 aa)).

The protein belongs to the methyltransferase superfamily. RlmKL family.

It is found in the cytoplasm. It carries out the reaction guanosine(2445) in 23S rRNA + S-adenosyl-L-methionine = N(2)-methylguanosine(2445) in 23S rRNA + S-adenosyl-L-homocysteine + H(+). It catalyses the reaction guanosine(2069) in 23S rRNA + S-adenosyl-L-methionine = N(2)-methylguanosine(2069) in 23S rRNA + S-adenosyl-L-homocysteine + H(+). Specifically methylates the guanine in position 2445 (m2G2445) and the guanine in position 2069 (m7G2069) of 23S rRNA. This is Ribosomal RNA large subunit methyltransferase K/L from Acinetobacter baumannii (strain ACICU).